The sequence spans 71 residues: Disintegrin tzabcanin (71 aa).

The Disintegrin domain maps to 1-71 (GEECDCGSPA…ADCPRNHFHA (71 aa)). 6 disulfides stabilise this stretch: C4–C19, C6–C14, C13–C36, C27–C33, C32–C57, and C45–C64. A Cell attachment site motif is present at residues 49–51 (RGD).

It belongs to the venom metalloproteinase (M12B) family. P-II subfamily. P-IIa sub-subfamily. As to expression, expressed by the venom gland.

Its subcellular location is the secreted. In terms of biological role, inhibits fibrinogen interaction with platelets. Acts by binding to alpha-IIb/beta-3 (ITGA2B/ITGB3) on the platelet surface and inhibits aggregation induced by ADP, thrombin, platelet-activating factor and collagen. Inhibits cell adhesion to vitronectin, probably by blocking its receptor integrin alpha-V/beta-3 (ITGAV/ITGB3), and to fibronectin in vitro. Shows little to no cytotoxicity in vitro. In Crotalus tzabcan (Yucatan neotropical rattlesnake), this protein is Disintegrin tzabcanin.